A 145-amino-acid polypeptide reads, in one-letter code: Putative antiporter subunit mnhG2 (145 aa).

A run of 3 helical transmembrane segments spans residues 11 to 31, 51 to 71, and 72 to 92; these read IAAV…IGIV, VLLT…FFSV, and RLLL…HLVA.

This sequence belongs to the CPA3 antiporters (TC 2.A.63) subunit G family. May form a heterooligomeric complex that consists of seven subunits: mnhA2, mnhB2, mnhC2, mnhD2, mnhE2, mnhF2 and mnhG2.

The protein localises to the cell membrane. In Staphylococcus aureus (strain JH9), this protein is Putative antiporter subunit mnhG2 (mnhG2).